A 77-amino-acid chain; its full sequence is Conotoxin LiC42 (77 aa).

Residues 1–22 (MKLTCVLIIAVLFLTASQLITA) form the signal peptide. Residues 23–47 (DYSRDKQEYGAERLRDAMGKFKGSR) constitute a propeptide that is removed on maturation. 3 disulfide bridges follow: cysteine 49–cysteine 62, cysteine 56–cysteine 67, and cysteine 61–cysteine 76.

This sequence belongs to the conotoxin O1 superfamily. As to expression, expressed by the venom duct.

It is found in the secreted. This chain is Conotoxin LiC42, found in Conus lividus (Livid cone).